Reading from the N-terminus, the 274-residue chain is Orotidine 5'-phosphate decarboxylase (274 aa).

Lysine 95 functions as the Proton donor in the catalytic mechanism.

The protein belongs to the OMP decarboxylase family. Type 2 subfamily.

The catalysed reaction is orotidine 5'-phosphate + H(+) = UMP + CO2. Its pathway is pyrimidine metabolism; UMP biosynthesis via de novo pathway; UMP from orotate: step 2/2. The polypeptide is Orotidine 5'-phosphate decarboxylase (Variovorax paradoxus (strain S110)).